Consider the following 440-residue polypeptide: Ribosomal protein uS12 methylthiotransferase RimO (440 aa).

One can recognise an MTTase N-terminal domain in the interval 5–115 (PTVGFVSLGC…VVNAVHEVVP (111 aa)). Cysteine 14, cysteine 50, cysteine 79, cysteine 148, cysteine 152, and cysteine 155 together coordinate [4Fe-4S] cluster. The 239-residue stretch at 134–372 (LTPRHYAYLK…MAHQQAISAA (239 aa)) folds into the Radical SAM core domain. In terms of domain architecture, TRAM spans 375 to 440 (QLKVGKELDV…DEYDLWAEVI (66 aa)).

This sequence belongs to the methylthiotransferase family. RimO subfamily. It depends on [4Fe-4S] cluster as a cofactor.

It is found in the cytoplasm. The enzyme catalyses L-aspartate(89)-[ribosomal protein uS12]-hydrogen + (sulfur carrier)-SH + AH2 + 2 S-adenosyl-L-methionine = 3-methylsulfanyl-L-aspartate(89)-[ribosomal protein uS12]-hydrogen + (sulfur carrier)-H + 5'-deoxyadenosine + L-methionine + A + S-adenosyl-L-homocysteine + 2 H(+). Its function is as follows. Catalyzes the methylthiolation of an aspartic acid residue of ribosomal protein uS12. The chain is Ribosomal protein uS12 methylthiotransferase RimO from Stutzerimonas stutzeri (strain A1501) (Pseudomonas stutzeri).